The chain runs to 338 residues: Lipoate-protein ligase A (338 aa).

In terms of domain architecture, BPL/LPL catalytic spans 29 to 216 (PATQRVLFLW…AFFAHYGERV (188 aa)). ATP contacts are provided by residues Arg-71, 76–79 (GAVF), and Lys-134. Lys-134 lines the (R)-lipoate pocket.

It belongs to the LplA family. In terms of assembly, monomer.

Its subcellular location is the cytoplasm. The enzyme catalyses L-lysyl-[lipoyl-carrier protein] + (R)-lipoate + ATP = N(6)-[(R)-lipoyl]-L-lysyl-[lipoyl-carrier protein] + AMP + diphosphate + H(+). It functions in the pathway protein modification; protein lipoylation via exogenous pathway; protein N(6)-(lipoyl)lysine from lipoate: step 1/2. It participates in protein modification; protein lipoylation via exogenous pathway; protein N(6)-(lipoyl)lysine from lipoate: step 2/2. Catalyzes both the ATP-dependent activation of exogenously supplied lipoate to lipoyl-AMP and the transfer of the activated lipoyl onto the lipoyl domains of lipoate-dependent enzymes. This Escherichia coli (strain SMS-3-5 / SECEC) protein is Lipoate-protein ligase A.